The primary structure comprises 209 residues: MIGLVGRKVGMTRIFTEEGVSIPVTVVEVEVNRVSQVKTVETDGYNAIQVTCGSKKANRVSKPEAGHFAKAGVEAGRGLWEFRLENGEEFTVGAELSVEIFNEIKKVDVTGTSKGKGFQGAIKRWNFATQDMTHGNSLSHRAPGSIGQCQTPGRVFKGKKMAGHMGAERCTTQNLEIVRVDAERNLLLIKGAVPGSTGGNVIVKPAVKA.

N5-methylglutamine is present on Q150.

Belongs to the universal ribosomal protein uL3 family. Part of the 50S ribosomal subunit. Forms a cluster with proteins L14 and L19. Post-translationally, methylated by PrmB.

Functionally, one of the primary rRNA binding proteins, it binds directly near the 3'-end of the 23S rRNA, where it nucleates assembly of the 50S subunit. This chain is Large ribosomal subunit protein uL3, found in Aliivibrio salmonicida (strain LFI1238) (Vibrio salmonicida (strain LFI1238)).